The chain runs to 166 residues: Xanthine-guanine phosphoribosyltransferase (166 aa).

5-phospho-alpha-D-ribose 1-diphosphate contacts are provided by residues 42–43 (RG) and 99–107 (DDLTDTGKT). Asp-100 provides a ligand contact to Mg(2+). Asp-103 and Ile-146 together coordinate guanine. 2 residues coordinate xanthine: Asp-103 and Ile-146. Residues 103 to 107 (DTGKT) and 145 to 146 (WI) each bind GMP.

Belongs to the purine/pyrimidine phosphoribosyltransferase family. XGPT subfamily. Homotetramer. Mg(2+) serves as cofactor.

Its subcellular location is the cell inner membrane. It carries out the reaction GMP + diphosphate = guanine + 5-phospho-alpha-D-ribose 1-diphosphate. The enzyme catalyses XMP + diphosphate = xanthine + 5-phospho-alpha-D-ribose 1-diphosphate. The catalysed reaction is IMP + diphosphate = hypoxanthine + 5-phospho-alpha-D-ribose 1-diphosphate. The protein operates within purine metabolism; GMP biosynthesis via salvage pathway; GMP from guanine: step 1/1. Its pathway is purine metabolism; XMP biosynthesis via salvage pathway; XMP from xanthine: step 1/1. Purine salvage pathway enzyme that catalyzes the transfer of the ribosyl-5-phosphate group from 5-phospho-alpha-D-ribose 1-diphosphate (PRPP) to the N9 position of the 6-oxopurines guanine and xanthine to form the corresponding ribonucleotides GMP (guanosine 5'-monophosphate) and XMP (xanthosine 5'-monophosphate), with the release of PPi. To a lesser extent, also acts on hypoxanthine. The protein is Xanthine-guanine phosphoribosyltransferase of Mesorhizobium japonicum (strain LMG 29417 / CECT 9101 / MAFF 303099) (Mesorhizobium loti (strain MAFF 303099)).